The primary structure comprises 473 residues: Phosphatidylserine synthase 1 (473 aa).

Ala2 is subject to N-acetylalanine. Topologically, residues 2-35 (ASCVGSRTLSKDDVNYKMHFRMINEQQVEDITID) are cytoplasmic. The helical transmembrane segment at 36 to 56 (FFYRPHTITLLSFTIVSLMYF) threads the bilayer. Over 57–72 (AFTRDDSVPEDNIWRG) the chain is Lumenal. The chain crosses the membrane as a helical span at residues 73 to 93 (ILSVIFFFLIISVLAFPNGPF). Over 94 to 102 (TRPHPALWR) the chain is Cytoplasmic. A helical membrane pass occupies residues 103–123 (MVFGLSVLYFLFLVFLLFLNF). The Lumenal portion of the chain corresponds to 124–186 (EQVKSLMYWL…AMKALLIRSY (63 aa)). The chain crosses the membrane as a helical span at residues 187 to 207 (GLCWTISITWELTELFFMHLL). Topologically, residues 208–216 (PNFAECWWD) are cytoplasmic. The helical transmembrane segment at 217-237 (QVILDILLCNGGGIWLGMVVC) threads the bilayer. Over 238-286 (RFLEMRTYHWASFKDIHTTTGKIKRAVLQFTPASWTYVRWFDPKSSFQR) the chain is Lumenal. The chain crosses the membrane as a helical span at residues 287–307 (VAGIYLFMIIWQLTELNTFFL). Residues 308-319 (KHIFVFQASHPL) lie on the Cytoplasmic side of the membrane. A helical membrane pass occupies residues 320–342 (SWCRILFIGGITAPTVRQYYAYL). Over 343 to 355 (TDTQCKRVGTQCW) the chain is Lumenal. A helical transmembrane segment spans residues 356 to 376 (VFGVIGFLEAIVCIKFGQDLF). Over 377 to 383 (SKTQILY) the chain is Cytoplasmic. The helical transmembrane segment at 384–404 (VVLWLLCVAFTTFLCLYGMVW) threads the bilayer. Topologically, residues 405-473 (YAEHYGHREK…SKVTNGVGKK (69 aa)) are lumenal. 3 positions are modified to phosphoserine: Ser417, Ser425, and Ser454. The tract at residues 427–473 (DISWPHGKGSKGSEDGPHKHPGNSESHSSRRRNRHSKSKVTNGVGKK) is disordered. Over residues 455-464 (SRRRNRHSKS) the composition is skewed to basic residues.

This sequence belongs to the phosphatidyl serine synthase family.

It localises to the endoplasmic reticulum membrane. It catalyses the reaction a 1,2-diacyl-sn-glycero-3-phosphoethanolamine + L-serine = a 1,2-diacyl-sn-glycero-3-phospho-L-serine + ethanolamine. The enzyme catalyses a 1,2-diacyl-sn-glycero-3-phosphocholine + L-serine = a 1,2-diacyl-sn-glycero-3-phospho-L-serine + choline. It functions in the pathway phospholipid metabolism; phosphatidylserine biosynthesis. Catalyzes a base-exchange reaction in which the polar head group of phosphatidylethanolamine (PE) or phosphatidylcholine (PC) is replaced by L-serine. Catalyzes mainly the conversion of phosphatidylcholine but also converts, in vitro and to a lesser extent, phosphatidylethanolamine. The chain is Phosphatidylserine synthase 1 (PTDSS1) from Bos taurus (Bovine).